A 414-amino-acid polypeptide reads, in one-letter code: Cytochrome c-554 (414 aa).

The N-terminal stretch at 1–24 (MQSSRPSDRQLAIVVSVAVGIVVA) is a signal peptide. The heme site is built by Met110, Cys131, Cys134, His135, Met154, Cys179, Cys182, His183, Met283, Cys294, Cys297, His298, Cys378, Cys381, and His382.

Binds 4 heme groups per subunit. Post-translationally, the N-terminus is blocked.

Its subcellular location is the periplasm. Serves as the immediate electron donor to the oxidized BChl2 (bacteriochlorophyll dimer) that is oxidized in the first step of light-induced charge separation. Can also oxidize low-potential substrates. The polypeptide is Cytochrome c-554 (puf2C) (Chloroflexus aurantiacus (strain ATCC 29366 / DSM 635 / J-10-fl)).